A 663-amino-acid chain; its full sequence is Probable acetolactate synthase 2, chloroplastic (663 aa).

The span at 1–26 (MAAAAAAASLSVSDAAAKLPKPGGQV) shows a compositional bias: low complexity. The disordered stretch occupies residues 1-56 (MAAAAAAASLSVSDAAAKLPKPGGQVQRRRDRDRPRVDAAACTRDSRRPTRERCST). Residues 1–79 (MAAAAAAASL…TPVRAPVRTR (79 aa)) constitute a chloroplast transit peptide. Composition is skewed to basic and acidic residues over residues 28 to 37 (RRRDRDRPRV) and 44 to 54 (RDSRRPTRERC). Glutamate 132 serves as a coordination point for thiamine diphosphate. The cysteines at positions 152 and 298 are disulfide-linked. FAD contacts are provided by residues arginine 234, 340 to 361 (HGTV…LGVR), and 383 to 402 (DIDP…ICAD). Residues 478-558 (QHQMWATQHY…VKVMVLNNQH (81 aa)) are thiamine pyrophosphate binding. Mg(2+) contacts are provided by aspartate 529 and asparagine 556.

It belongs to the TPP enzyme family. Mg(2+) serves as cofactor. Thiamine diphosphate is required as a cofactor.

The protein resides in the plastid. It is found in the chloroplast. It carries out the reaction 2 pyruvate + H(+) = (2S)-2-acetolactate + CO2. It participates in amino-acid biosynthesis; L-isoleucine biosynthesis; L-isoleucine from 2-oxobutanoate: step 1/4. The protein operates within amino-acid biosynthesis; L-valine biosynthesis; L-valine from pyruvate: step 1/4. The sequence is that of Probable acetolactate synthase 2, chloroplastic (ALS2) from Oryza sativa subsp. japonica (Rice).